Here is a 630-residue protein sequence, read N- to C-terminus: 1-deoxy-D-xylulose-5-phosphate synthase (630 aa).

Residues histidine 72 and 113 to 115 (GHS) each bind thiamine diphosphate. A Mg(2+)-binding site is contributed by aspartate 144. Thiamine diphosphate contacts are provided by residues 145 to 146 (GA), asparagine 173, tyrosine 284, and glutamate 367. Asparagine 173 lines the Mg(2+) pocket.

This sequence belongs to the transketolase family. DXPS subfamily. As to quaternary structure, homodimer. The cofactor is Mg(2+). Thiamine diphosphate serves as cofactor.

It catalyses the reaction D-glyceraldehyde 3-phosphate + pyruvate + H(+) = 1-deoxy-D-xylulose 5-phosphate + CO2. The protein operates within metabolic intermediate biosynthesis; 1-deoxy-D-xylulose 5-phosphate biosynthesis; 1-deoxy-D-xylulose 5-phosphate from D-glyceraldehyde 3-phosphate and pyruvate: step 1/1. Its function is as follows. Catalyzes the acyloin condensation reaction between C atoms 2 and 3 of pyruvate and glyceraldehyde 3-phosphate to yield 1-deoxy-D-xylulose-5-phosphate (DXP). This is 1-deoxy-D-xylulose-5-phosphate synthase from Geobacillus sp. (strain WCH70).